The chain runs to 394 residues: Elongation factor Tu 1 (394 aa).

Positions 10-204 constitute a tr-type G domain; it reads KPHVNVGTIG…ALDTYIPEPE (195 aa). The segment at 19–26 is G1; the sequence is GHVDHGKT. 19 to 26 is a binding site for GTP; it reads GHVDHGKT. Position 26 (Thr26) interacts with Mg(2+). A G2 region spans residues 60–64; that stretch reads GITIS. The tract at residues 81-84 is G3; the sequence is DCPG. GTP contacts are provided by residues 81–85 and 136–139; these read DCPGH and NKCD. The G4 stretch occupies residues 136–139; the sequence is NKCD. A G5 region spans residues 174–176; that stretch reads SAL.

Belongs to the TRAFAC class translation factor GTPase superfamily. Classic translation factor GTPase family. EF-Tu/EF-1A subfamily. In terms of assembly, monomer.

The protein resides in the cytoplasm. The catalysed reaction is GTP + H2O = GDP + phosphate + H(+). Functionally, GTP hydrolase that promotes the GTP-dependent binding of aminoacyl-tRNA to the A-site of ribosomes during protein biosynthesis. The polypeptide is Elongation factor Tu 1 (Vibrio vulnificus (strain CMCP6)).